Consider the following 368-residue polypeptide: MTTPSAELPALARIRDDVRAMQAYVVADATGYLKMDAMENPFGLPPALQAALGQRLGQLALNRYPGTRQNDLKAALAAYAGAPAGSAVLLGNGSDELISLVALACARAQATVLAPVPGFVMYAMSAQLQGLGFVGVPLTADFELDEAAMLAAIAQHRPAITFLAYPNNPTATLWDEAVVQRIIDAAGAQGGIVVMDEAYQPFASRSWIERMRAQPERNGHVLLMRTLSKFGLAGVRLGYMIGPAALVAEVDKVRPPYNVSVLNTEAALFALEHADVFAAQADELRAARTELLAALRAMPGIERVWDSQANMVLVRVPDAARAYEGMKARKVLVKNVSTMHPLLAGCLRLTVGSSADNAQMLTALQASL.

Lys-229 carries the N6-(pyridoxal phosphate)lysine modification.

The protein belongs to the class-II pyridoxal-phosphate-dependent aminotransferase family. Histidinol-phosphate aminotransferase subfamily. Homodimer. Requires pyridoxal 5'-phosphate as cofactor.

It catalyses the reaction L-histidinol phosphate + 2-oxoglutarate = 3-(imidazol-4-yl)-2-oxopropyl phosphate + L-glutamate. It participates in amino-acid biosynthesis; L-histidine biosynthesis; L-histidine from 5-phospho-alpha-D-ribose 1-diphosphate: step 7/9. The sequence is that of Histidinol-phosphate aminotransferase from Acidovorax sp. (strain JS42).